The chain runs to 302 residues: Glutaminase (302 aa).

7 residues coordinate substrate: Ser61, Asn111, Glu155, Asn162, Tyr186, Tyr238, and Val256.

It belongs to the glutaminase family. Homotetramer.

The catalysed reaction is L-glutamine + H2O = L-glutamate + NH4(+). This Pseudomonas syringae pv. tomato (strain ATCC BAA-871 / DC3000) protein is Glutaminase.